A 332-amino-acid chain; its full sequence is NADH-quinone oxidoreductase subunit H (332 aa).

9 consecutive transmembrane segments (helical) span residues 4-24, 44-64, 78-98, 120-140, 165-185, 194-214, 255-275, 279-299, and 312-332; these read FAFF…IFAS, IGPD…MIKL, FIFA…LAAI, VALL…FLGG, VGAL…LVDI, FSWL…ALFI, IAGA…FWII, IMMI…RAAF, and YLIL…TVLL.

This sequence belongs to the complex I subunit 1 family. In terms of assembly, NDH-1 is composed of 14 different subunits. Subunits NuoA, H, J, K, L, M, N constitute the membrane sector of the complex.

It localises to the cell inner membrane. It catalyses the reaction a quinone + NADH + 5 H(+)(in) = a quinol + NAD(+) + 4 H(+)(out). NDH-1 shuttles electrons from NADH, via FMN and iron-sulfur (Fe-S) centers, to quinones in the respiratory chain. The immediate electron acceptor for the enzyme in this species is believed to be ubiquinone. Couples the redox reaction to proton translocation (for every two electrons transferred, four hydrogen ions are translocated across the cytoplasmic membrane), and thus conserves the redox energy in a proton gradient. This subunit may bind ubiquinone. In Campylobacter jejuni subsp. jejuni serotype O:2 (strain ATCC 700819 / NCTC 11168), this protein is NADH-quinone oxidoreductase subunit H.